Reading from the N-terminus, the 393-residue chain is Elongation factor Tu (393 aa).

Positions 10 to 203 (KPHVNIGTIG…AVDNYIPEPV (194 aa)) constitute a tr-type G domain. Positions 19–26 (GHVDHGKT) are G1. 19–26 (GHVDHGKT) contacts GTP. Thr-26 serves as a coordination point for Mg(2+). The tract at residues 60-64 (GITIS) is G2. A G3 region spans residues 81–84 (DCPG). GTP-binding positions include 81–85 (DCPGH) and 136–139 (NKVD). The segment at 136–139 (NKVD) is G4. Positions 173–175 (SAL) are G5.

It belongs to the TRAFAC class translation factor GTPase superfamily. Classic translation factor GTPase family. EF-Tu/EF-1A subfamily. Monomer.

The protein resides in the cytoplasm. The enzyme catalyses GTP + H2O = GDP + phosphate + H(+). GTP hydrolase that promotes the GTP-dependent binding of aminoacyl-tRNA to the A-site of ribosomes during protein biosynthesis. This is Elongation factor Tu from Chlorobium phaeovibrioides (strain DSM 265 / 1930) (Prosthecochloris vibrioformis (strain DSM 265)).